A 319-amino-acid polypeptide reads, in one-letter code: Acetyl-coenzyme A carboxylase carboxyl transferase subunit alpha (319 aa).

The CoA carboxyltransferase C-terminal domain occupies 35-296 (NLDEEVQRLR…KAQLLADLSD (262 aa)).

The protein belongs to the AccA family. As to quaternary structure, acetyl-CoA carboxylase is a heterohexamer composed of biotin carboxyl carrier protein (AccB), biotin carboxylase (AccC) and two subunits each of ACCase subunit alpha (AccA) and ACCase subunit beta (AccD).

The protein localises to the cytoplasm. It carries out the reaction N(6)-carboxybiotinyl-L-lysyl-[protein] + acetyl-CoA = N(6)-biotinyl-L-lysyl-[protein] + malonyl-CoA. Its pathway is lipid metabolism; malonyl-CoA biosynthesis; malonyl-CoA from acetyl-CoA: step 1/1. In terms of biological role, component of the acetyl coenzyme A carboxylase (ACC) complex. First, biotin carboxylase catalyzes the carboxylation of biotin on its carrier protein (BCCP) and then the CO(2) group is transferred by the carboxyltransferase to acetyl-CoA to form malonyl-CoA. The chain is Acetyl-coenzyme A carboxylase carboxyl transferase subunit alpha from Yersinia enterocolitica serotype O:8 / biotype 1B (strain NCTC 13174 / 8081).